The following is a 633-amino-acid chain: Phosphomethylpyrimidine synthase (633 aa).

Residues N245, M274, Y303, H339, S359–G361, D400–R403, and E439 each bind substrate. H443 is a binding site for Zn(2+). Residue Y466 coordinates substrate. Residue H507 coordinates Zn(2+). [4Fe-4S] cluster contacts are provided by C587, C590, and C595.

This sequence belongs to the ThiC family. Homodimer. It depends on [4Fe-4S] cluster as a cofactor.

It carries out the reaction 5-amino-1-(5-phospho-beta-D-ribosyl)imidazole + S-adenosyl-L-methionine = 4-amino-2-methyl-5-(phosphooxymethyl)pyrimidine + CO + 5'-deoxyadenosine + formate + L-methionine + 3 H(+). It participates in cofactor biosynthesis; thiamine diphosphate biosynthesis. Its function is as follows. Catalyzes the synthesis of the hydroxymethylpyrimidine phosphate (HMP-P) moiety of thiamine from aminoimidazole ribotide (AIR) in a radical S-adenosyl-L-methionine (SAM)-dependent reaction. This chain is Phosphomethylpyrimidine synthase, found in Neisseria meningitidis serogroup C / serotype 2a (strain ATCC 700532 / DSM 15464 / FAM18).